Here is a 471-residue protein sequence, read N- to C-terminus: Putative F-box protein At5g36200 (471 aa).

The F-box domain maps to 1 to 46 (MAMSDLPNDLVEEIISRVPVKSIRAVSSTCKNWNTLSNDHSFTRKL).

This is Putative F-box protein At5g36200 from Arabidopsis thaliana (Mouse-ear cress).